A 271-amino-acid polypeptide reads, in one-letter code: MLPTVFIVSDGTGITAETFAHSILSQFDQKFRLVRVPFVDSLEKAYSTVEKINEAAVHDGRRAIVFTTLVDSVSNDIVKRSNALVLDMFQRFVEPLEQELELKSSHAMGRGHQNADTEEYKTRIEAINFSLAHDDGQSNRNLSEADVILVGVSRSGKTPTSLYLAMQYGVKAANYPLIPEDFERGKLPSALTQHREKLFGLSIDPQRLSEIRNERRPGSKYAAPENCRYEINESEAMMRREGIKWLSSTHKSIEEIATTILQEIRLERQSY.

151–158 serves as a coordination point for ADP; it reads GVSRSGKT.

The protein belongs to the pyruvate, phosphate/water dikinase regulatory protein family. PSRP subfamily.

The enzyme catalyses [pyruvate, water dikinase] + ADP = [pyruvate, water dikinase]-phosphate + AMP + H(+). It carries out the reaction [pyruvate, water dikinase]-phosphate + phosphate + H(+) = [pyruvate, water dikinase] + diphosphate. Its function is as follows. Bifunctional serine/threonine kinase and phosphorylase involved in the regulation of the phosphoenolpyruvate synthase (PEPS) by catalyzing its phosphorylation/dephosphorylation. This chain is Putative phosphoenolpyruvate synthase regulatory protein, found in Burkholderia vietnamiensis (strain G4 / LMG 22486) (Burkholderia cepacia (strain R1808)).